The chain runs to 401 residues: UDP-N-acetylglucosamine--N-acetylmuramyl-(pentapeptide) pyrophosphoryl-undecaprenol N-acetylglucosamine transferase (401 aa).

Residues 1 to 24 are disordered; sequence MTRISVPAGQERNDGGISVPAGQE. UDP-N-acetyl-alpha-D-glucosamine-binding positions include 39–41, N157, R194, S228, and Q324; that span reads TAG.

This sequence belongs to the glycosyltransferase 28 family. MurG subfamily.

The protein resides in the cell membrane. The enzyme catalyses di-trans,octa-cis-undecaprenyl diphospho-N-acetyl-alpha-D-muramoyl-L-alanyl-D-glutamyl-meso-2,6-diaminopimeloyl-D-alanyl-D-alanine + UDP-N-acetyl-alpha-D-glucosamine = di-trans,octa-cis-undecaprenyl diphospho-[N-acetyl-alpha-D-glucosaminyl-(1-&gt;4)]-N-acetyl-alpha-D-muramoyl-L-alanyl-D-glutamyl-meso-2,6-diaminopimeloyl-D-alanyl-D-alanine + UDP + H(+). It participates in cell wall biogenesis; peptidoglycan biosynthesis. Cell wall formation. Catalyzes the transfer of a GlcNAc subunit on undecaprenyl-pyrophosphoryl-MurNAc-pentapeptide (lipid intermediate I) to form undecaprenyl-pyrophosphoryl-MurNAc-(pentapeptide)GlcNAc (lipid intermediate II). This chain is UDP-N-acetylglucosamine--N-acetylmuramyl-(pentapeptide) pyrophosphoryl-undecaprenol N-acetylglucosamine transferase, found in Mycolicibacterium vanbaalenii (strain DSM 7251 / JCM 13017 / BCRC 16820 / KCTC 9966 / NRRL B-24157 / PYR-1) (Mycobacterium vanbaalenii).